We begin with the raw amino-acid sequence, 121 residues long: uncharacterized protein (121 aa).

The protein resides in the mitochondrion. This is an uncharacterized protein from Arabidopsis thaliana (Mouse-ear cress).